Reading from the N-terminus, the 443-residue chain is MEDDEDIRSQGSDSPDPSSSPPAGRITVTVASAGPPSYSLTPPGNSSQKDPDALALALLPIQASGGGNNSSGRPTGGGGREDCWSEAATAVLIDAWGERYLELSRGNLKQKHWKEVAEIVSSREDYGKIPKTDIQCKNRIDTVKKKYKQEKVRIANGGGRSRWVFFDKLDRLIGSTAKIPTATSGVSGPVGGLHKIPMGIPMGSRSNLYHQQAKAATPPFNNLDRLIGATARVSAASFGGSGGGGGGGSVNVPMGIPMSSRSAPFGQQGRTLPQQGRTLPQQQQQGMMVKRCSESKRWRFRKRNASDSDSESEAAMSDDSGDSLPPPPLSKRMKTEEKKKQDGDGVGNKWRELTRAIMRFGEAYEQTENAKLQQVVEMEKERMKFLKELELQRMQFFVKTQLEISQLKQQHGRRMGNTSNDHHHSRKNNINAIVNNNNDLGNN.

The interval 1-82 is disordered; sequence MEDDEDIRSQ…RPTGGGGRED (82 aa). Residues 38 to 48 are compositionally biased toward polar residues; sequence YSLTPPGNSSQ. Residues 64–78 show a composition bias toward gly residues; sequence SGGGNNSSGRPTGGG. A Myb-like domain is found at 84–144; it reads WSEAATAVLI…QCKNRIDTVK (61 aa). 2 disordered regions span residues 238–350 and 413–443; these read FGGS…GNKW and RRMG…LGNN. Positions 239 to 249 are enriched in gly residues; the sequence is GGSGGGGGGGS. Over residues 271-286 the composition is skewed to low complexity; the sequence is TLPQQGRTLPQQQQQG. Residues 290 to 303 carry the Bipartite nuclear localization signal motif; it reads KRCSESKRWRFRKR. Over residues 333 to 350 the composition is skewed to basic and acidic residues; it reads MKTEEKKKQDGDGVGNKW. The stretch at 360–414 forms a coiled coil; that stretch reads FGEAYEQTENAKLQQVVEMEKERMKFLKELELQRMQFFVKTQLEISQLKQQHGRR. Over residues 428–443 the composition is skewed to low complexity; sequence NNINAIVNNNNDLGNN.

It is found in the nucleus. Transcription regulator that may repress the maturation program during early embryogenesis. This chain is Trihelix transcription factor ASIL2, found in Arabidopsis thaliana (Mouse-ear cress).